The chain runs to 399 residues: Elongation factor Tu (399 aa).

The tr-type G domain maps to 10–209; that stretch reads KPHVNIGTIG…EVDAYIPTPV (200 aa). A G1 region spans residues 19–26; the sequence is GHVDHGKT. Residue 19–26 participates in GTP binding; the sequence is GHVDHGKT. Residue T26 participates in Mg(2+) binding. The tract at residues 60–64 is G2; sequence GITIA. The interval 81–84 is G3; sequence DCPG. GTP is bound by residues 81–85 and 136–139; these read DCPGH and NKQD. Residues 136–139 are G4; it reads NKQD. A G5 region spans residues 174–176; sequence SAL.

The protein belongs to the TRAFAC class translation factor GTPase superfamily. Classic translation factor GTPase family. EF-Tu/EF-1A subfamily. Monomer.

It is found in the cytoplasm. The enzyme catalyses GTP + H2O = GDP + phosphate + H(+). Its function is as follows. GTP hydrolase that promotes the GTP-dependent binding of aminoacyl-tRNA to the A-site of ribosomes during protein biosynthesis. The polypeptide is Elongation factor Tu (Helicobacter acinonychis (strain Sheeba)).